The primary structure comprises 1451 residues: DNA excision repair protein ERCC-6-like (1451 aa).

A TPR 1 repeat occupies 27–60 (YDRYRQKGKEAALNGELPRALELFQLAYQLQPSE). Residues 118 to 286 (SLYRDGRKGG…WALFDFACQG (169 aa)) form the Helicase ATP-binding domain. Residue 131 to 138 (DDMGLGKT) participates in ATP binding. The short motif at 237–240 (DEAH) is the DEAH box element. The Helicase C-terminal domain maps to 479-639 (FVVSLMECLR…PFRYFSKQEL (161 aa)). Disordered stretches follow at residues 647–669 (DTRS…RSDT), 778–804 (NSFD…ETAS), 935–1006 (DDTS…ATTD), 1035–1054 (DEEV…EFQL), 1063–1083 (LEEP…NYND), 1096–1140 (RSTP…LTSS), and 1182–1343 (LLEN…SAEL). Over residues 781 to 804 (DEPEFEEDEQNLPSAEDAEMETAS) the composition is skewed to acidic residues. 2 stretches are compositionally biased toward polar residues: residues 944 to 964 (SDFN…SPSL) and 992 to 1002 (QVLSSPLSQHE). Serine 961 carries the phosphoserine modification. Residues 1035 to 1050 (DEEVHEVEESAAEESP) are compositionally biased toward acidic residues. The segment covering 1063–1074 (LEEPSINHDKQN) has biased composition (basic and acidic residues). Acidic residues predominate over residues 1121-1132 (DTEEEEEEEEES). Over residues 1213-1230 (VQTSSGDNSKSYETSEAN) the composition is skewed to polar residues. Over residues 1244–1278 (YREGKNTSDKVSESNETHSEEFAEEEKPSGDKSES) the composition is skewed to basic and acidic residues. The segment covering 1310-1341 (SEADESVVEEEEPSGETLNTEESEMGEEEESA) has biased composition (acidic residues). The TPR 2 repeat unit spans residues 1402–1435 (YNLLVLSGKQSLAEGRKQEALDFFLKAIDINTGD).

Belongs to the SNF2/RAD54 helicase family.

Its subcellular location is the chromosome. It is found in the centromere. The protein localises to the kinetochore. It catalyses the reaction ATP + H2O = ADP + phosphate + H(+). Its function is as follows. DNA helicase that acts as a tension sensor that associates with catenated DNA which is stretched under tension until it is resolved during anaphase. Functions as ATP-dependent DNA translocase. Can promote Holliday junction branch migration (in vitro). This is DNA excision repair protein ERCC-6-like (ercc6l) from Danio rerio (Zebrafish).